The chain runs to 472 residues: Siroheme synthase (472 aa).

The segment at Met1 to Leu203 is precorrin-2 dehydrogenase /sirohydrochlorin ferrochelatase. NAD(+)-binding positions include Asp22–Ile23 and Lys43–Ser44. At Ser128 the chain carries Phosphoserine. The segment at Gly216–Gly472 is uroporphyrinogen-III C-methyltransferase. Pro225 lines the S-adenosyl-L-methionine pocket. Asp248 functions as the Proton acceptor in the catalytic mechanism. Lys270 (proton donor) is an active-site residue. S-adenosyl-L-methionine is bound by residues Gly301 to Asp303, Ile306, Thr331 to Ala332, Met383, and Gly412.

In the N-terminal section; belongs to the precorrin-2 dehydrogenase / sirohydrochlorin ferrochelatase family. It in the C-terminal section; belongs to the precorrin methyltransferase family.

It carries out the reaction uroporphyrinogen III + 2 S-adenosyl-L-methionine = precorrin-2 + 2 S-adenosyl-L-homocysteine + H(+). It catalyses the reaction precorrin-2 + NAD(+) = sirohydrochlorin + NADH + 2 H(+). The enzyme catalyses siroheme + 2 H(+) = sirohydrochlorin + Fe(2+). The protein operates within cofactor biosynthesis; adenosylcobalamin biosynthesis; precorrin-2 from uroporphyrinogen III: step 1/1. It functions in the pathway cofactor biosynthesis; adenosylcobalamin biosynthesis; sirohydrochlorin from precorrin-2: step 1/1. Its pathway is porphyrin-containing compound metabolism; siroheme biosynthesis; precorrin-2 from uroporphyrinogen III: step 1/1. It participates in porphyrin-containing compound metabolism; siroheme biosynthesis; siroheme from sirohydrochlorin: step 1/1. The protein operates within porphyrin-containing compound metabolism; siroheme biosynthesis; sirohydrochlorin from precorrin-2: step 1/1. In terms of biological role, multifunctional enzyme that catalyzes the SAM-dependent methylations of uroporphyrinogen III at position C-2 and C-7 to form precorrin-2 via precorrin-1. Then it catalyzes the NAD-dependent ring dehydrogenation of precorrin-2 to yield sirohydrochlorin. Finally, it catalyzes the ferrochelation of sirohydrochlorin to yield siroheme. The chain is Siroheme synthase from Ruthia magnifica subsp. Calyptogena magnifica.